Reading from the N-terminus, the 81-residue chain is Putative defensin-like protein 25 (81 aa).

Residues 1–23 (MASLKVFSFALILVLTFSVDVEG) form the signal peptide. 4 disulfides stabilise this stretch: Cys-33–Cys-81, Cys-43–Cys-68, Cys-52–Cys-77, and Cys-56–Cys-79.

It belongs to the DEFL family.

The protein localises to the secreted. The chain is Putative defensin-like protein 25 from Arabidopsis thaliana (Mouse-ear cress).